The following is a 182-amino-acid chain: ATP synthase subunit delta (182 aa).

It belongs to the ATPase delta chain family. In terms of assembly, F-type ATPases have 2 components, F(1) - the catalytic core - and F(0) - the membrane proton channel. F(1) has five subunits: alpha(3), beta(3), gamma(1), delta(1), epsilon(1). CF(0) has four main subunits: a(1), b(1), b'(1) and c(10-14). The alpha and beta chains form an alternating ring which encloses part of the gamma chain. F(1) is attached to F(0) by a central stalk formed by the gamma and epsilon chains, while a peripheral stalk is formed by the delta, b and b' chains.

Its subcellular location is the cellular thylakoid membrane. Its function is as follows. F(1)F(0) ATP synthase produces ATP from ADP in the presence of a proton or sodium gradient. F-type ATPases consist of two structural domains, F(1) containing the extramembraneous catalytic core and F(0) containing the membrane proton channel, linked together by a central stalk and a peripheral stalk. During catalysis, ATP synthesis in the catalytic domain of F(1) is coupled via a rotary mechanism of the central stalk subunits to proton translocation. In terms of biological role, this protein is part of the stalk that links CF(0) to CF(1). It either transmits conformational changes from CF(0) to CF(1) or is implicated in proton conduction. The polypeptide is ATP synthase subunit delta (Microcystis aeruginosa (strain NIES-843 / IAM M-2473)).